An 82-amino-acid chain; its full sequence is Putative membrane protein insertion efficiency factor (82 aa).

Belongs to the UPF0161 family.

Its subcellular location is the cell inner membrane. Could be involved in insertion of integral membrane proteins into the membrane. The protein is Putative membrane protein insertion efficiency factor of Thermus thermophilus (strain ATCC BAA-163 / DSM 7039 / HB27).